The primary structure comprises 150 residues: Protein ORF35 (150 aa).

The protein is Protein ORF35 (ORF35) of Homo sapiens (Human).